A 36-amino-acid polypeptide reads, in one-letter code: Conotoxin Cal6.1h (36 aa).

Positions 1 to 7 (GLGRPSR) are excised as a propeptide. Cystine bridges form between cysteine 9-cysteine 25, cysteine 16-cysteine 29, and cysteine 24-cysteine 34.

Belongs to the conotoxin O1 superfamily. In terms of tissue distribution, expressed by the venom duct.

The protein resides in the secreted. Functionally, probable neurotoxin with unknown target. Possibly targets ion channels. This Californiconus californicus (California cone) protein is Conotoxin Cal6.1h.